We begin with the raw amino-acid sequence, 559 residues long: uncharacterized protein (559 aa).

11 helical membrane-spanning segments follow: residues 103 to 123, 139 to 159, 192 to 212, 223 to 243, 263 to 283, 302 to 322, 348 to 368, 387 to 407, 413 to 434, 466 to 486, and 501 to 521; these read LAAL…NGLF, FGYY…LFYY, AGIT…SFPF, FFLI…IFLL, WSWV…TLAV, MLIL…SGVA, AAAF…NISD, IRRA…PWKI, AFLA…IFVA, ALIA…MSIN, and IGYF…NLVF.

Belongs to the purine-cytosine permease (2.A.39) family.

It localises to the golgi apparatus membrane. This is an uncharacterized protein from Schizosaccharomyces pombe (strain 972 / ATCC 24843) (Fission yeast).